The primary structure comprises 443 residues: Xaa-Pro dipeptidase (443 aa).

Mn(2+)-binding residues include aspartate 246, aspartate 257, histidine 339, glutamate 384, and glutamate 423.

Belongs to the peptidase M24B family. Bacterial-type prolidase subfamily. The cofactor is Mn(2+).

The enzyme catalyses Xaa-L-Pro dipeptide + H2O = an L-alpha-amino acid + L-proline. Functionally, splits dipeptides with a prolyl residue in the C-terminal position. The polypeptide is Xaa-Pro dipeptidase (Citrobacter koseri (strain ATCC BAA-895 / CDC 4225-83 / SGSC4696)).